Consider the following 285-residue polypeptide: Putative sugar uptake protein lmo0169 (285 aa).

10 helical membrane passes run 5–24 (IALIPAVMWGIMPLVVSKIG), 31–48 (IIGTTFGALAFAIGVFIF), 53–71 (YTATIIIASFVSGAFWSLG), 84–106 (VSKTMPLSTGMQLVGTSLFGVFA), 116–135 (LVLGFSALALIIIGIFLTSY), 151–173 (IITLLISSVGYVGYVVITRWFDI), 178–195 (AILPQAIGMVVAGLLFSI), 207–226 (WLNMIPGVMWATGNLALLFS), 232–254 (IATGFSLSQMGVVISTIGGILFL), and 263–282 (LILVIIGVVLVIIGGTMIGI).

It belongs to the GRP transporter (TC 2.A.7.5) family.

The protein resides in the cell membrane. This chain is Putative sugar uptake protein lmo0169, found in Listeria monocytogenes serovar 1/2a (strain ATCC BAA-679 / EGD-e).